The following is a 118-amino-acid chain: Na(+)/H(+) antiporter subunit G1 (118 aa).

3 helical membrane-spanning segments follow: residues 9–29 (VSIIFVVLGALISAFAATGLI), 47–67 (LGAMFLLFGAFLYFIGTEGYV), and 69–89 (MQLIIGIIFVFITGPLSSHLI).

This sequence belongs to the CPA3 antiporters (TC 2.A.63) subunit G family. In terms of assembly, may form a heterooligomeric complex that consists of seven subunits: mnhA1, mnhB1, mnhC1, mnhD1, mnhE1, mnhF1 and mnhG1.

It is found in the cell membrane. Its function is as follows. Mnh complex is a Na(+)/H(+) antiporter involved in Na(+) excretion. In Staphylococcus epidermidis (strain ATCC 35984 / DSM 28319 / BCRC 17069 / CCUG 31568 / BM 3577 / RP62A), this protein is Na(+)/H(+) antiporter subunit G1 (mnhG1).